A 135-amino-acid polypeptide reads, in one-letter code: C-type lectin BPL (135 aa).

4 disulfides stabilise this stretch: Cys-3/Cys-14, Cys-31/Cys-131, Cys-38/Cys-133, and Cys-106/Cys-123. One can recognise a C-type lectin domain in the interval 10–132 (MNGLCYKIFN…CESKNAFLCQ (123 aa)). Ca(2+)-binding residues include Gln-96, Asp-98, Glu-104, and Asp-120. The Galactose-binding signature appears at 96–98 (QPD).

It belongs to the true venom lectin family. As to quaternary structure, homodimer; disulfide-linked. In terms of tissue distribution, expressed by the venom gland.

Its subcellular location is the secreted. Galactose-binding protein which recognizes specific carbohydrate structures and agglutinates a variety of animal cells by binding to cell-surface glycoproteins and glycolipids. Calcium-dependent lectin. Shows high hemagglutinating activity in the presence of human erythrocytes, which are agglutinated with a minimum hemagglutination concentration (MHC) of 2.5-0.35 ug/ml. Causes indirect nephrotoxicity. Causes reductions in perfusion pressures, renal vascular resistance, urinary flow, glomerular filtration rate, sodium, potassium and chloride tubular transport. Its effects may be caused by the release of inflammatory mediators. The chain is C-type lectin BPL from Bothrops pirajai (Piraja's lancehead).